The sequence spans 822 residues: Protein SIEVE ELEMENT OCCLUSION A (822 aa).

The tract at residues 25-62 (PRSAEQRLADNAGERRPLAPRSHEDNPFGGHTDDHHVA) is disordered. Residues 28 to 62 (AEQRLADNAGERRPLAPRSHEDNPFGGHTDDHHVA) are compositionally biased toward basic and acidic residues.

In terms of assembly, can form homodimer. In terms of tissue distribution, expressed in phloem sieve elements.

Its function is as follows. Scaffold protein required to form the phloem filament matrix in sieve elements. This Arabidopsis thaliana (Mouse-ear cress) protein is Protein SIEVE ELEMENT OCCLUSION A.